Here is a 234-residue protein sequence, read N- to C-terminus: ATP synthase subunit a 1 (234 aa).

The next 5 membrane-spanning stretches (helical) occupy residues 20-40, 76-96, 105-125, 162-184, and 195-215; these read ETVV…ILLT, LLPL…LGVI, DLSV…AYGV, LFGN…GFLA, and EALV…AGAM.

The protein belongs to the ATPase A chain family. In terms of assembly, F-type ATPases have 2 components, CF(1) - the catalytic core - and CF(0) - the membrane proton channel. CF(1) has five subunits: alpha(3), beta(3), gamma(1), delta(1), epsilon(1). CF(0) has three main subunits: a(1), b(2) and c(9-12). The alpha and beta chains form an alternating ring which encloses part of the gamma chain. CF(1) is attached to CF(0) by a central stalk formed by the gamma and epsilon chains, while a peripheral stalk is formed by the delta and b chains.

Its subcellular location is the cell inner membrane. Its function is as follows. Key component of the proton channel; it plays a direct role in the translocation of protons across the membrane. The protein is ATP synthase subunit a 1 of Hahella chejuensis (strain KCTC 2396).